A 338-amino-acid polypeptide reads, in one-letter code: Deoxyhypusine hydroxylase (338 aa).

HEAT-like PBS-type repeat units lie at residues 71 to 97, 104 to 130, 200 to 233, 238 to 264, and 271 to 298; these read LKHE…VLKD, CRHE…LKDD, QRYR…GLKD, FRHE…CLSN, and VRHE…FLND. 4 residues coordinate Fe cation: H73, E74, H106, and E107. Residues H240, E241, H273, and E274 each coordinate Fe cation.

The protein belongs to the deoxyhypusine hydroxylase family. The cofactor is Fe(2+).

Its subcellular location is the cytoplasm. The protein resides in the nucleus. The enzyme catalyses [eIF5A protein]-deoxyhypusine + AH2 + O2 = [eIF5A protein]-hypusine + A + H2O. Its pathway is protein modification; eIF5A hypusination. Catalyzes the hydroxylation of the N(6)-(4-aminobutyl)-L-lysine intermediate to form hypusine, an essential post-translational modification only found in mature eIF-5A factor. The chain is Deoxyhypusine hydroxylase (lia1) from Aspergillus niger (strain ATCC MYA-4892 / CBS 513.88 / FGSC A1513).